Consider the following 159-residue polypeptide: Large ribosomal subunit protein uL11 (159 aa).

Basic and acidic residues predominate over residues 137–149 (EGKDPREVQREVD). The segment at 137-159 (EGKDPREVQREVDSGAWDKLLGG) is disordered.

The protein belongs to the universal ribosomal protein uL11 family. Part of the ribosomal stalk of the 50S ribosomal subunit. Interacts with L10 and the large rRNA to form the base of the stalk. L10 forms an elongated spine to which L12 dimers bind in a sequential fashion forming a multimeric L10(L12)X complex.

In terms of biological role, forms part of the ribosomal stalk which helps the ribosome interact with GTP-bound translation factors. The polypeptide is Large ribosomal subunit protein uL11 (Korarchaeum cryptofilum (strain OPF8)).